A 105-amino-acid chain; its full sequence is MTDKPEINDEVEKLISSIEEKNRLEAERKANKLLSKNKRELNRLYKHAQIAAENNNFAQYEYAIKKSRDILKQPYNDELISILWKTTRSQIEDMIDAYTRKIQAS.

This is an uncharacterized protein from Escherichia coli (Bacteriophage T4).